Reading from the N-terminus, the 177-residue chain is Large ribosomal subunit protein uL6 (177 aa).

Belongs to the universal ribosomal protein uL6 family. In terms of assembly, part of the 50S ribosomal subunit.

In terms of biological role, this protein binds to the 23S rRNA, and is important in its secondary structure. It is located near the subunit interface in the base of the L7/L12 stalk, and near the tRNA binding site of the peptidyltransferase center. The protein is Large ribosomal subunit protein uL6 of Methylobacterium nodulans (strain LMG 21967 / CNCM I-2342 / ORS 2060).